The following is a 144-amino-acid chain: Large ribosomal subunit protein uL15 (144 aa).

Residues 1–52 are disordered; the sequence is MRLNSLSPAEGAKHSAKRLGRGIGSGLGKTGGRGHKGQKSRTGGGVRRGFEG. A compositionally biased stretch (gly residues) spans 21–31; the sequence is RGIGSGLGKTG.

The protein belongs to the universal ribosomal protein uL15 family. Part of the 50S ribosomal subunit.

Its function is as follows. Binds to the 23S rRNA. This Actinobacillus pleuropneumoniae serotype 5b (strain L20) protein is Large ribosomal subunit protein uL15.